The chain runs to 323 residues: tRNA dimethylallyltransferase (323 aa).

Gly12 to Thr19 serves as a coordination point for ATP. Residue Thr14–Thr19 coordinates substrate. Interaction with substrate tRNA stretches follow at residues Asp37–Leu40 and Gln161–Arg165.

The protein belongs to the IPP transferase family. Monomer. Mg(2+) serves as cofactor.

It carries out the reaction adenosine(37) in tRNA + dimethylallyl diphosphate = N(6)-dimethylallyladenosine(37) in tRNA + diphosphate. Catalyzes the transfer of a dimethylallyl group onto the adenine at position 37 in tRNAs that read codons beginning with uridine, leading to the formation of N6-(dimethylallyl)adenosine (i(6)A). The sequence is that of tRNA dimethylallyltransferase from Pseudomonas savastanoi pv. phaseolicola (strain 1448A / Race 6) (Pseudomonas syringae pv. phaseolicola (strain 1448A / Race 6)).